A 355-amino-acid chain; its full sequence is Peptide chain release factor 1 (355 aa).

Gln233 is subject to N5-methylglutamine.

This sequence belongs to the prokaryotic/mitochondrial release factor family. Methylated by PrmC. Methylation increases the termination efficiency of RF1.

The protein resides in the cytoplasm. Peptide chain release factor 1 directs the termination of translation in response to the peptide chain termination codons UAG and UAA. The sequence is that of Peptide chain release factor 1 from Syntrophobacter fumaroxidans (strain DSM 10017 / MPOB).